A 358-amino-acid polypeptide reads, in one-letter code: 3'(2'),5'-bisphosphate nucleotidase 2 (358 aa).

The active-site Proton acceptor is Asp-54. Positions 77, 141, 143, and 144 each coordinate Mg(2+). The active-site Proton acceptor is Thr-146. Thr-146, His-243, Ser-272, Lys-275, Arg-289, and Asp-302 together coordinate adenosine 3',5'-bisphosphate. AMP is bound by residues His-243, Ser-272, Lys-275, Arg-289, and Asp-302. Asp-302 contributes to the Mg(2+) binding site.

It belongs to the inositol monophosphatase superfamily. Mg(2+) is required as a cofactor.

It carries out the reaction 3'-phosphoadenylyl sulfate + H2O = adenosine 5'-phosphosulfate + phosphate. The catalysed reaction is adenosine 3',5'-bisphosphate + H2O = AMP + phosphate. The enzyme catalyses adenosine 2',5'-bisphosphate + H2O = AMP + phosphate. Functionally, phosphatase that converts adenosine 3'-phosphate 5'-phosphosulfate (PAPS) to adenosine 5'-phosphosulfate (APS) and 3'(2')-phosphoadenosine 5'-phosphate (PAP) to AMP. Regulates the flux of sulfur in the sulfur-activation pathway by converting PAPS to APS. Involved in salt tolerance. This chain is 3'(2'),5'-bisphosphate nucleotidase 2 (HAL22), found in Candida albicans (strain SC5314 / ATCC MYA-2876) (Yeast).